A 118-amino-acid polypeptide reads, in one-letter code: Large ribosomal subunit protein uL18 (118 aa).

The protein belongs to the universal ribosomal protein uL18 family. As to quaternary structure, part of the 50S ribosomal subunit; part of the 5S rRNA/L5/L18/L25 subcomplex. Contacts the 5S and 23S rRNAs.

Functionally, this is one of the proteins that bind and probably mediate the attachment of the 5S RNA into the large ribosomal subunit, where it forms part of the central protuberance. In Sulfurovum sp. (strain NBC37-1), this protein is Large ribosomal subunit protein uL18.